The primary structure comprises 443 residues: Serine/threonine-protein phosphatase 2A 55 kDa regulatory subunit B beta isoform (443 aa).

WD repeat units follow at residues 22 to 61 (TEAD…KNQV), 87 to 128 (EIEE…KRPE), 171 to 209 (AHTY…QSFN), and 220 to 260 (ELTE…LCDR). Phosphoserine is present on serine 275. WD repeat units lie at residues 279-317 (EIIS…RPVE), 334-375 (ENDC…DVTL), and 410-442 (DFSK…QDKV). Position 295 is a phosphotyrosine (tyrosine 295). Threonine 298 carries the phosphothreonine modification.

Belongs to the phosphatase 2A regulatory subunit B family. PP2A consists of a common heterodimeric core enzyme, composed of a 36 kDa catalytic subunit (subunit C) and a 65 kDa constant regulatory subunit (PR65 or subunit A), that associates with a variety of regulatory subunits. Proteins that associate with the core dimer include three families of regulatory subunits B (the R2/B/PR55/B55, R3/B''/PR72/PR130/PR59 and R5/B'/B56 families), the 48 kDa variable regulatory subunit, viral proteins, and cell signaling molecules. Interacts with IER5 (via N- and C-terminal regions). Interacts with TOMM22. Expressed in the brain. Isoform 1 and isoform 2 are expressed in the forbrain. Isoform 1 is more strongly expressed than isoform 2 in the olfactory bulb. Isoform 1 and isoform 2 are weakly expressed in the cerebellum. Isoform 1 is expressed in the testis. Isoform 2 expression is undetectable at birth rising to adult level at day 14.

It is found in the cytoplasm. The protein resides in the cytoskeleton. Its subcellular location is the membrane. The protein localises to the mitochondrion. It localises to the mitochondrion outer membrane. Functionally, the B regulatory subunit might modulate substrate selectivity and catalytic activity, and might also direct the localization of the catalytic enzyme to a particular subcellular compartment. Within the PP2A holoenzyme complex, isoform 2 is required to promote proapoptotic activity. Isoform 2 regulates neuronal survival through the mitochondrial fission and fusion balance. This is Serine/threonine-protein phosphatase 2A 55 kDa regulatory subunit B beta isoform (Ppp2r2b) from Rattus norvegicus (Rat).